Here is a 122-residue protein sequence, read N- to C-terminus: Ribosome-binding factor A (122 aa).

This sequence belongs to the RbfA family. Monomer. Binds 30S ribosomal subunits, but not 50S ribosomal subunits or 70S ribosomes.

Its subcellular location is the cytoplasm. One of several proteins that assist in the late maturation steps of the functional core of the 30S ribosomal subunit. Associates with free 30S ribosomal subunits (but not with 30S subunits that are part of 70S ribosomes or polysomes). Required for efficient processing of 16S rRNA. May interact with the 5'-terminal helix region of 16S rRNA. The sequence is that of Ribosome-binding factor A from Burkholderia mallei (strain NCTC 10229).